The following is a 293-amino-acid chain: uncharacterized protein (293 aa).

A run of 7 helical transmembrane segments spans residues Phe55–Cys75, Thr77–Gly97, Pro110–Cys130, Phe138–Gly158, Trp164–Leu184, Leu193–Thr213, and Leu226–Phe246. The N-linked (GlcNAc...) asparagine; by host glycan is linked to Asn287.

It belongs to the cytomegalovirus US12 family.

It is found in the membrane. This is an uncharacterized protein from Human cytomegalovirus (strain AD169) (HHV-5).